The sequence spans 225 residues: Sodium-dependent neutral amino acid transporter SLC6A17 (225 aa).

3 helical membrane-spanning segments follow: residues 1–8, 16–35, and 60–80; these read NVWRFPYL, AYLVPYLVLLIIIGIPLFFL, and GIGFSSCIVCLFVGLYYNVII. Residues 81 to 143 lie on the Extracellular side of the membrane; the sequence is GWSIFYFFKS…NSISESGGLN (63 aa). An N-linked (GlcNAc...) asparagine glycan is attached at asparagine 105. Helical transmembrane passes span 144–162, 171–188, and 224–225; these read WKMTLCLLVAWRIVGMAVV, VMYFSSLFPYVVLACFLV, and IF.

This sequence belongs to the sodium:neurotransmitter symporter (SNF) (TC 2.A.22) family.

The protein localises to the cytoplasmic vesicle. It localises to the secretory vesicle. It is found in the synaptic vesicle membrane. The protein resides in the postsynapse. Its subcellular location is the presynapse. The catalysed reaction is L-proline(in) + Na(+)(in) = L-proline(out) + Na(+)(out). It catalyses the reaction L-leucine(in) + Na(+)(in) = L-leucine(out) + Na(+)(out). The enzyme catalyses glycine(in) + Na(+)(in) = glycine(out) + Na(+)(out). It carries out the reaction L-alanine(in) + Na(+)(in) = L-alanine(out) + Na(+)(out). The catalysed reaction is L-glutamine(in) + Na(+)(in) = L-glutamine(out) + Na(+)(out). Functionally, synaptic vesicle transporter with apparent selectivity for neutral amino acids. The transport is sodium-coupled but chloride-independent, likely driven by the proton electrochemical gradient generated by vacuolar H(+)-ATPase in an overall electrogenic mechanism. May contribute to the synaptic uptake of neurotransmitter precursors in a process coupled in part to vesicle exocytosis. In Bos taurus (Bovine), this protein is Sodium-dependent neutral amino acid transporter SLC6A17.